The chain runs to 156 residues: Large ribosomal subunit protein uL15 (156 aa).

Over residues 1 to 11 the composition is skewed to basic and acidic residues; that stretch reads MKLNDLRDKPG. A disordered region spans residues 1–40; the sequence is MKLNDLRDKPGSVKARKRVGRGIGSGTGKTGGRGVKGQKS. The span at 21-35 shows a compositional bias: gly residues; sequence RGIGSGTGKTGGRGV.

This sequence belongs to the universal ribosomal protein uL15 family. As to quaternary structure, part of the 50S ribosomal subunit.

In terms of biological role, binds to the 23S rRNA. This Brucella anthropi (strain ATCC 49188 / DSM 6882 / CCUG 24695 / JCM 21032 / LMG 3331 / NBRC 15819 / NCTC 12168 / Alc 37) (Ochrobactrum anthropi) protein is Large ribosomal subunit protein uL15.